A 130-amino-acid polypeptide reads, in one-letter code: Small ribosomal subunit protein uS8 (130 aa).

The protein belongs to the universal ribosomal protein uS8 family. As to quaternary structure, part of the 30S ribosomal subunit. Contacts proteins S5 and S12.

Its function is as follows. One of the primary rRNA binding proteins, it binds directly to 16S rRNA central domain where it helps coordinate assembly of the platform of the 30S subunit. The sequence is that of Small ribosomal subunit protein uS8 from Ruegeria pomeroyi (strain ATCC 700808 / DSM 15171 / DSS-3) (Silicibacter pomeroyi).